The following is a 162-amino-acid chain: Photosystem II extrinsic protein V (162 aa).

An N-terminal signal peptide occupies residues 1-26 (MFNKNFWTSIIIGCLFCTITYSGVNA). Cys62, Cys65, His66, and His117 together coordinate heme c.

The protein belongs to the cytochrome c family. PsbV subfamily. PSII is composed of 1 copy each of membrane proteins PsbA, PsbB, PsbC, PsbD, PsbE, PsbF, PsbH, PsbI, PsbJ, PsbK, PsbL, PsbM, PsbT, PsbX, PsbY, PsbZ, Psb30/Ycf12, at least 3 peripheral proteins of the oxygen-evolving complex and a large number of cofactors. It forms dimeric complexes. Requires heme c as cofactor.

The protein resides in the plastid. It localises to the cyanelle thylakoid membrane. Its function is as follows. One of the extrinsic, lumenal subunits of photosystem II (PSII). PSII is a light-driven water plastoquinone oxidoreductase, using light energy to abstract electrons from H(2)O, generating a proton gradient subsequently used for ATP formation. The extrinsic proteins stabilize the structure of photosystem II oxygen-evolving complex (OEC), the ion environment of oxygen evolution and protect the OEC against heat-induced inactivation. The chain is Photosystem II extrinsic protein V from Cyanophora paradoxa.